A 64-amino-acid chain; its full sequence is uncharacterized protein (64 aa).

Residues Val15 to Val37 traverse the membrane as a helical segment.

The protein belongs to the HHV-5 US34A protein family.

Its subcellular location is the host membrane. This is an uncharacterized protein from Human cytomegalovirus (strain AD169) (HHV-5).